Reading from the N-terminus, the 190-residue chain is Probable nicotinate-nucleotide adenylyltransferase (190 aa).

Belongs to the NadD family.

It carries out the reaction nicotinate beta-D-ribonucleotide + ATP + H(+) = deamido-NAD(+) + diphosphate. It participates in cofactor biosynthesis; NAD(+) biosynthesis; deamido-NAD(+) from nicotinate D-ribonucleotide: step 1/1. Its function is as follows. Catalyzes the reversible adenylation of nicotinate mononucleotide (NaMN) to nicotinic acid adenine dinucleotide (NaAD). This is Probable nicotinate-nucleotide adenylyltransferase from Borrelia turicatae (strain 91E135).